Consider the following 312-residue polypeptide: Aspartate carbamoyltransferase catalytic subunit (312 aa).

Arg-58 and Thr-59 together coordinate carbamoyl phosphate. Lys-86 lines the L-aspartate pocket. Residues Arg-108, His-136, and Gln-139 each coordinate carbamoyl phosphate. Positions 169 and 223 each coordinate L-aspartate. The carbamoyl phosphate site is built by Gly-264 and Pro-265.

The protein belongs to the aspartate/ornithine carbamoyltransferase superfamily. ATCase family. In terms of assembly, heterododecamer (2C3:3R2) of six catalytic PyrB chains organized as two trimers (C3), and six regulatory PyrI chains organized as three dimers (R2).

It catalyses the reaction carbamoyl phosphate + L-aspartate = N-carbamoyl-L-aspartate + phosphate + H(+). Its pathway is pyrimidine metabolism; UMP biosynthesis via de novo pathway; (S)-dihydroorotate from bicarbonate: step 2/3. Its function is as follows. Catalyzes the condensation of carbamoyl phosphate and aspartate to form carbamoyl aspartate and inorganic phosphate, the committed step in the de novo pyrimidine nucleotide biosynthesis pathway. The sequence is that of Aspartate carbamoyltransferase catalytic subunit from Desulforapulum autotrophicum (strain ATCC 43914 / DSM 3382 / VKM B-1955 / HRM2) (Desulfobacterium autotrophicum).